The primary structure comprises 166 residues: NADH-quinone oxidoreductase subunit C (166 aa).

This sequence belongs to the complex I 30 kDa subunit family. NDH-1 is composed of 14 different subunits. Subunits NuoB, C, D, E, F, and G constitute the peripheral sector of the complex.

The protein localises to the cell inner membrane. The catalysed reaction is a quinone + NADH + 5 H(+)(in) = a quinol + NAD(+) + 4 H(+)(out). Its function is as follows. NDH-1 shuttles electrons from NADH, via FMN and iron-sulfur (Fe-S) centers, to quinones in the respiratory chain. The immediate electron acceptor for the enzyme in this species is believed to be a menaquinone. Couples the redox reaction to proton translocation (for every two electrons transferred, four hydrogen ions are translocated across the cytoplasmic membrane), and thus conserves the redox energy in a proton gradient. The sequence is that of NADH-quinone oxidoreductase subunit C from Chlorobium phaeobacteroides (strain DSM 266 / SMG 266 / 2430).